Reading from the N-terminus, the 133-residue chain is ATP synthase epsilon chain, chloroplastic (133 aa).

It belongs to the ATPase epsilon chain family. F-type ATPases have 2 components, CF(1) - the catalytic core - and CF(0) - the membrane proton channel. CF(1) has five subunits: alpha(3), beta(3), gamma(1), delta(1), epsilon(1). CF(0) has three main subunits: a, b and c.

It localises to the plastid. It is found in the chloroplast thylakoid membrane. Produces ATP from ADP in the presence of a proton gradient across the membrane. The protein is ATP synthase epsilon chain, chloroplastic of Mesostigma viride (Green alga).